A 305-amino-acid polypeptide reads, in one-letter code: Heat stress transcription factor B-4d (305 aa).

A hydrophobic repeat HR-A/B region spans residues 201–230 (LRRRNSLLLSELAHMRKLYNDIIYFLQNHV). The short motif at 286–289 (KKRR) is the Nuclear localization signal element. The segment at 286 to 305 (KKRRVQLVQEDEGDEQGSEG) is disordered. Positions 294–305 (QEDEGDEQGSEG) are enriched in acidic residues.

Belongs to the HSF family. Class B subfamily. Homotrimer. Exhibits temperature-dependent phosphorylation.

The protein resides in the nucleus. In terms of biological role, transcriptional regulator that specifically binds DNA of heat shock promoter elements (HSE). This chain is Heat stress transcription factor B-4d (HSFB4D), found in Oryza sativa subsp. japonica (Rice).